A 67-amino-acid polypeptide reads, in one-letter code: Large ribosomal subunit protein eL24 (67 aa).

4 residues coordinate Zn(2+): Cys-7, Cys-10, Cys-33, and Cys-37. The C4-type zinc finger occupies 7–37 (CSYCGKEFEPGTGKMYVRNDGRVYFFCSRKC).

This sequence belongs to the eukaryotic ribosomal protein eL24 family. In terms of assembly, part of the 50S ribosomal subunit. Forms a cluster with proteins L3 and L14. It depends on Zn(2+) as a cofactor.

Its function is as follows. Binds to the 23S rRNA. This Thermococcus sibiricus (strain DSM 12597 / MM 739) protein is Large ribosomal subunit protein eL24.